Here is a 217-residue protein sequence, read N- to C-terminus: tRNA (guanine-N(7)-)-methyltransferase (217 aa).

Positions 44, 69, 96, and 118 each coordinate S-adenosyl-L-methionine. Asp-118 is a catalytic residue. Lys-122 is a binding site for substrate. Residues 124–129 (RHEKRR) are interaction with RNA. Substrate is bound by residues Asp-154 and 193 to 196 (TEYE).

Belongs to the class I-like SAM-binding methyltransferase superfamily. TrmB family.

The enzyme catalyses guanosine(46) in tRNA + S-adenosyl-L-methionine = N(7)-methylguanosine(46) in tRNA + S-adenosyl-L-homocysteine. The protein operates within tRNA modification; N(7)-methylguanine-tRNA biosynthesis. Its function is as follows. Catalyzes the formation of N(7)-methylguanine at position 46 (m7G46) in tRNA. This chain is tRNA (guanine-N(7)-)-methyltransferase, found in Lactococcus lactis subsp. cremoris (strain SK11).